A 131-amino-acid chain; its full sequence is uncharacterized protein (131 aa).

The interval 99–131 is disordered; sequence NAIQEEEIDMEQQEEKEEKPREKGKKKSVEEEF. Acidic residues predominate over residues 102–113; it reads QEEEIDMEQQEE. Basic and acidic residues predominate over residues 114–131; that stretch reads KEEKPREKGKKKSVEEEF.

This is an uncharacterized protein from Sulfolobus islandicus rod-shaped virus 1 (SIRV-1).